A 123-amino-acid polypeptide reads, in one-letter code: Aberrant microtubules protein 1 (123 aa).

Functionally, required for normal microtubule organization. The polypeptide is Aberrant microtubules protein 1 (ABM1) (Saccharomyces cerevisiae (strain ATCC 204508 / S288c) (Baker's yeast)).